We begin with the raw amino-acid sequence, 750 residues long: Dual specificity tyrosine-phosphorylation-regulated kinase 1A (750 aa).

Disordered regions lie at residues 56–81 and 104–129; these read ALPYNDQTPQPLPNQRRMPQTFRDPA and YAKKKRRHQQGQGDDSSHKKERKVYN. The Bipartite nuclear localization signal motif lies at 109-126; it reads RRHQQGQGDDSSHKKERK. Residues 151–471 form the Protein kinase domain; the sequence is YEIDSLIGKG…PYYALQHSFF (321 aa). ATP-binding positions include 157–165, K180, and 230–233; these read IGKGSFGQV and FEML. D279 acts as the Proton acceptor in catalysis. 4 disordered regions span residues 400–434, 477–531, 583–666, and 731–750; these read TKDGKKEYKPPGTRKLHNILGVENGGPGGRRAGES, EGTN…RHSG, SQKN…GNQA, and DREDSPMTGVCVQQSPVASS. Positions 477–493 are enriched in polar residues; it reads EGTNTSNSVSTSPAMEQ. The span at 494–517 shows a compositional bias: low complexity; sequence SQSSGTTSSTSSSSGGSSGTSNSG. The tract at residues 584–612 is histidine-rich domain (HRD); sequence QKNVPHHHGNGSHHHHHHHHHHHGQHILS. Residues 587 to 608 show a composition bias toward basic residues; it reads VPHHHGNGSHHHHHHHHHHHGQ. Residues 610–621 show a composition bias toward polar residues; that stretch reads ILSNRTRTRIYN. Low complexity predominate over residues 622 to 659; the sequence is SPSTSSSTQDSMDIGNSHHSMTSLSSSTTSSSTSSSST. Residues 741 to 750 are compositionally biased toward polar residues; it reads CVQQSPVASS.

Belongs to the protein kinase superfamily. CMGC Ser/Thr protein kinase family. MNB/DYRK subfamily. Autophosphorylated on tyrosine residues.

It is found in the nucleus. The protein localises to the nucleus speckle. The catalysed reaction is L-seryl-[protein] + ATP = O-phospho-L-seryl-[protein] + ADP + H(+). The enzyme catalyses L-threonyl-[protein] + ATP = O-phospho-L-threonyl-[protein] + ADP + H(+). It carries out the reaction L-tyrosyl-[protein] + ATP = O-phospho-L-tyrosyl-[protein] + ADP + H(+). It catalyses the reaction [DNA-directed RNA polymerase] + ATP = phospho-[DNA-directed RNA polymerase] + ADP + H(+). Its function is as follows. Dual-specificity kinase which possesses both serine/threonine and tyrosine kinase activities. Exhibits a substrate preference for proline at position P+1 and arginine at position P-3. Plays an important role in double-strand breaks (DSBs) repair following DNA damage. Mechanistically, phosphorylates RNF169 and increases its ability to block accumulation of TP53BP1 at the DSB sites thereby promoting homologous recombination repair (HRR). Also acts as a positive regulator of transcription by acting as a CTD kinase that mediates phosphorylation of the CTD (C-terminal domain) of the large subunit of RNA polymerase II (RNAP II) POLR2A. Modulates alternative splicing by phosphorylating the splice factor SRSF6. Phosphorylates SEPTIN4, SEPTIN5 and SF3B1. In Xenopus laevis (African clawed frog), this protein is Dual specificity tyrosine-phosphorylation-regulated kinase 1A.